A 426-amino-acid polypeptide reads, in one-letter code: Dihydroorotase (426 aa).

Positions 59 and 61 each coordinate Zn(2+). Residues 61 to 63 (HLR) and Asn93 contribute to the substrate site. Zn(2+)-binding residues include Asp151, His178, and His232. Position 279 (Asn279) interacts with substrate. Asp306 lines the Zn(2+) pocket. Asp306 is a catalytic residue. Substrate is bound by residues His310 and 324–325 (FG).

Belongs to the metallo-dependent hydrolases superfamily. DHOase family. Class I DHOase subfamily. Zn(2+) serves as cofactor.

The enzyme catalyses (S)-dihydroorotate + H2O = N-carbamoyl-L-aspartate + H(+). Its pathway is pyrimidine metabolism; UMP biosynthesis via de novo pathway; (S)-dihydroorotate from bicarbonate: step 3/3. Its function is as follows. Catalyzes the reversible cyclization of carbamoyl aspartate to dihydroorotate. The chain is Dihydroorotase from Brevibacillus brevis (strain 47 / JCM 6285 / NBRC 100599).